A 506-amino-acid polypeptide reads, in one-letter code: Histidine ammonia-lyase (506 aa).

The segment at residues 143–145 is a cross-link (5-imidazolinone (Ala-Gly)); it reads ASG. Ser144 bears the 2,3-didehydroalanine (Ser) mark.

This sequence belongs to the PAL/histidase family. Contains an active site 4-methylidene-imidazol-5-one (MIO), which is formed autocatalytically by cyclization and dehydration of residues Ala-Ser-Gly.

It localises to the cytoplasm. The catalysed reaction is L-histidine = trans-urocanate + NH4(+). It functions in the pathway amino-acid degradation; L-histidine degradation into L-glutamate; N-formimidoyl-L-glutamate from L-histidine: step 1/3. In Salmonella schwarzengrund (strain CVM19633), this protein is Histidine ammonia-lyase.